The sequence spans 207 residues: Serotonin N-acetyltransferase (207 aa).

Residues 1 to 28 (MSTQSTHPLKPEAPRLPPGIPESPSCQR) are disordered. At Thr31 the chain carries Phosphothreonine; by PKA. Residues 35 to 194 (SEFRCLTPED…SLTFMELHCS (160 aa)) form the N-acetyltransferase domain. Residue Leu124 participates in substrate binding. Acetyl-CoA is bound by residues 124–126 (LAV) and 132–137 (QQGRGP). Substrate is bound at residue Met159. Residue 168–170 (YER) coordinates acetyl-CoA. Ser205 is modified (phosphoserine).

It belongs to the acetyltransferase family. AANAT subfamily. Monomer. Interacts with several 14-3-3 proteins, including YWHAB, YWHAE, YWHAG and YWHAZ, preferentially when phosphorylated at Thr-31. Phosphorylation on Ser-205 also allows binding to YWHAZ, but with lower affinity. The interaction with YWHAZ considerably increases affinity for arylalkylamines and acetyl-CoA and protects the enzyme from dephosphorylation and proteasomal degradation. It may also prevent thiol-dependent inactivation. In terms of processing, cAMP-dependent phosphorylation on both N-terminal Thr-31 and C-terminal Ser-205 regulates AANAT activity by promoting interaction with 14-3-3 proteins. Highly expressed in pineal gland and at lower levels in the retina. Weak expression in several brain regions and in the pituitary gland.

The protein resides in the cytoplasm. The enzyme catalyses a 2-arylethylamine + acetyl-CoA = an N-acetyl-2-arylethylamine + CoA + H(+). The protein operates within aromatic compound metabolism; melatonin biosynthesis; melatonin from serotonin: step 1/2. Functionally, controls the night/day rhythm of melatonin production in the pineal gland. Catalyzes the N-acetylation of serotonin into N-acetylserotonin, the penultimate step in the synthesis of melatonin. The protein is Serotonin N-acetyltransferase (AANAT) of Homo sapiens (Human).